A 750-amino-acid polypeptide reads, in one-letter code: Photosystem I P700 chlorophyll a apoprotein A1 (750 aa).

8 helical membrane passes run 70–93 (VFSA…FHGA), 156–179 (LYCT…FHYH), 195–219 (LNHH…HVSL), 291–309 (IAHH…GHMY), 346–369 (WHAQ…HHMY), 385–411 (LSLF…IFMV), 433–455 (AIIS…LYIH), and 531–549 (FLVH…LILL). Positions 573 and 582 each coordinate [4Fe-4S] cluster. Helical transmembrane passes span 589–610 (HVFL…HFSW) and 664–686 (LSAY…MFLF). Residue His675 coordinates chlorophyll a'. Chlorophyll a contacts are provided by Met683 and Tyr691. Residue Trp692 participates in phylloquinone binding. A helical transmembrane segment spans residues 724-744 (AVGVTHYLLGGIATTWAFFLA).

It belongs to the PsaA/PsaB family. In terms of assembly, the PsaA/B heterodimer binds the P700 chlorophyll special pair and subsequent electron acceptors. PSI consists of a core antenna complex that captures photons, and an electron transfer chain that converts photonic excitation into a charge separation. The eukaryotic PSI reaction center is composed of at least 11 subunits. P700 is a chlorophyll a/chlorophyll a' dimer, A0 is one or more chlorophyll a, A1 is one or both phylloquinones and FX is a shared 4Fe-4S iron-sulfur center. serves as cofactor.

It localises to the plastid. Its subcellular location is the chloroplast thylakoid membrane. It carries out the reaction reduced [plastocyanin] + hnu + oxidized [2Fe-2S]-[ferredoxin] = oxidized [plastocyanin] + reduced [2Fe-2S]-[ferredoxin]. Its function is as follows. PsaA and PsaB bind P700, the primary electron donor of photosystem I (PSI), as well as the electron acceptors A0, A1 and FX. PSI is a plastocyanin-ferredoxin oxidoreductase, converting photonic excitation into a charge separation, which transfers an electron from the donor P700 chlorophyll pair to the spectroscopically characterized acceptors A0, A1, FX, FA and FB in turn. Oxidized P700 is reduced on the lumenal side of the thylakoid membrane by plastocyanin. The protein is Photosystem I P700 chlorophyll a apoprotein A1 of Amborella trichopoda.